Here is a 325-residue protein sequence, read N- to C-terminus: Small ribosomal subunit protein uS2 (325 aa).

Positions 212 to 226 (KEEQAKAEAERERLA) are enriched in basic and acidic residues. A disordered region spans residues 212–325 (KEEQAKAEAE…TEPKASTGNW (114 aa)). Low complexity-rich tracts occupy residues 234 to 247 (QPAAPQQDPDQWAD) and 261 to 289 (PVTTAPVPTGGAPPVASTTATPATNTGSG). A compositionally biased stretch (polar residues) spans 290-300 (FNQDDWSVPTT).

Belongs to the universal ribosomal protein uS2 family. In terms of assembly, component of the small ribosomal subunit. Mature ribosomes consist of a small (40S) and a large (60S) subunit. The 40S subunit contains about 33 different proteins and 1 molecule of RNA (18S). The 60S subunit contains about 49 different proteins and 3 molecules of RNA (28S, 5.8S and 5S). Interacts with ribosomal protein S21.

Its subcellular location is the cytoplasm. In terms of biological role, required for the assembly and/or stability of the 40S ribosomal subunit. Required for the processing of the 20S rRNA-precursor to mature 18S rRNA in a late step of the maturation of 40S ribosomal subunits. This Suberites domuncula (Sponge) protein is Small ribosomal subunit protein uS2.